The following is a 349-amino-acid chain: tRNA N6-adenosine threonylcarbamoyltransferase (349 aa).

The Fe cation site is built by His115 and His119. Residues 137–141 (LASGG), Asp170, Gly183, and Asn281 contribute to the substrate site. Residue Asp309 coordinates Fe cation.

It belongs to the KAE1 / TsaD family. Requires Fe(2+) as cofactor.

It localises to the cytoplasm. It carries out the reaction L-threonylcarbamoyladenylate + adenosine(37) in tRNA = N(6)-L-threonylcarbamoyladenosine(37) in tRNA + AMP + H(+). Functionally, required for the formation of a threonylcarbamoyl group on adenosine at position 37 (t(6)A37) in tRNAs that read codons beginning with adenine. Is involved in the transfer of the threonylcarbamoyl moiety of threonylcarbamoyl-AMP (TC-AMP) to the N6 group of A37, together with TsaE and TsaB. TsaD likely plays a direct catalytic role in this reaction. The chain is tRNA N6-adenosine threonylcarbamoyltransferase from Methylobacterium nodulans (strain LMG 21967 / CNCM I-2342 / ORS 2060).